Reading from the N-terminus, the 89-residue chain is Elongation factor 1-beta (89 aa).

This sequence belongs to the EF-1-beta/EF-1-delta family.

Promotes the exchange of GDP for GTP in EF-1-alpha/GDP, thus allowing the regeneration of EF-1-alpha/GTP that could then be used to form the ternary complex EF-1-alpha/GTP/AAtRNA. This Methanococcus maripaludis (strain C5 / ATCC BAA-1333) protein is Elongation factor 1-beta.